A 151-amino-acid polypeptide reads, in one-letter code: UPF0719 transmembrane protein MAP_1032c (151 aa).

A run of 4 helical transmembrane segments spans residues V20–V40, A60–A80, L90–A110, and P130–V150.

This sequence belongs to the UPF0719 family.

The protein localises to the cell membrane. This is UPF0719 transmembrane protein MAP_1032c from Mycolicibacterium paratuberculosis (strain ATCC BAA-968 / K-10) (Mycobacterium paratuberculosis).